The chain runs to 347 residues: Heat-inducible transcription repressor HrcA (347 aa).

The protein belongs to the HrcA family.

Its function is as follows. Negative regulator of class I heat shock genes (grpE-dnaK-dnaJ and groELS operons). Prevents heat-shock induction of these operons. The polypeptide is Heat-inducible transcription repressor HrcA (Desulforamulus reducens (strain ATCC BAA-1160 / DSM 100696 / MI-1) (Desulfotomaculum reducens)).